A 317-amino-acid polypeptide reads, in one-letter code: Transaldolase (317 aa).

The active-site Schiff-base intermediate with substrate is the Lys-126.

It belongs to the transaldolase family. Type 1 subfamily. In terms of assembly, homodimer.

Its subcellular location is the cytoplasm. It catalyses the reaction D-sedoheptulose 7-phosphate + D-glyceraldehyde 3-phosphate = D-erythrose 4-phosphate + beta-D-fructose 6-phosphate. It functions in the pathway carbohydrate degradation; pentose phosphate pathway; D-glyceraldehyde 3-phosphate and beta-D-fructose 6-phosphate from D-ribose 5-phosphate and D-xylulose 5-phosphate (non-oxidative stage): step 2/3. Its function is as follows. Transaldolase is important for the balance of metabolites in the pentose-phosphate pathway. The polypeptide is Transaldolase (Burkholderia vietnamiensis (strain G4 / LMG 22486) (Burkholderia cepacia (strain R1808))).